A 143-amino-acid polypeptide reads, in one-letter code: MASSSMASAASGFMVATPNIATSNTAPRTSMLFFSSSKNNTTTNFPRLVVRAAEEAAPPAATATAEGEAPPAKAAKPPPIGPKRGTKVRVLRKESYWYKGVGSVVAVDQDPNTRYPVVVRFNKVNYANVSTNNYALDEVEEVK.

Residues 1–51 (MASSSMASAASGFMVATPNIATSNTAPRTSMLFFSSSKNNTTTNFPRLVVR) constitute a chloroplast transit peptide. Low complexity predominate over residues 56-75 (AAPPAATATAEGEAPPAKAA). The interval 56 to 86 (AAPPAATATAEGEAPPAKAAKPPPIGPKRGT) is disordered.

Belongs to the PsaE family. In terms of processing, 2 isoforms exists (ratio 1:1). With or without the N-terminal alanine.

It is found in the plastid. The protein localises to the chloroplast thylakoid membrane. Stabilizes the interaction between PsaC and the PSI core, assists the docking of the ferredoxin to PSI and interacts with ferredoxin-NADP oxidoreductase. The polypeptide is Photosystem I reaction center subunit IV B, chloroplastic (PSAEB) (Nicotiana sylvestris (Wood tobacco)).